The sequence spans 442 residues: Exodeoxyribonuclease 7 large subunit (442 aa).

The protein belongs to the XseA family. In terms of assembly, heterooligomer composed of large and small subunits.

It is found in the cytoplasm. The catalysed reaction is Exonucleolytic cleavage in either 5'- to 3'- or 3'- to 5'-direction to yield nucleoside 5'-phosphates.. Functionally, bidirectionally degrades single-stranded DNA into large acid-insoluble oligonucleotides, which are then degraded further into small acid-soluble oligonucleotides. The sequence is that of Exodeoxyribonuclease 7 large subunit from Shewanella sediminis (strain HAW-EB3).